The sequence spans 184 residues: MEGSGEHGETSKGPLSKGVSRGLCILDLIFRVIAVIGTLASAIAMGTTNQTMPFFTQFVQFKERYSDLPTLTFFVVANSIASAYLIISLPLSIVHIIRSRAKYSRLILIFFDVAMLALVTAAASAGAAIVYLAHNGNVSANWFAICQQFDSFCERISGSLIGSFAAMVVLILLILLSAVALARR.

Residues 1 to 22 (MEGSGEHGETSKGPLSKGVSRG) lie on the Cytoplasmic side of the membrane. Residues 23–43 (LCILDLIFRVIAVIGTLASAI) form a helical membrane-spanning segment. The Extracellular segment spans residues 44–72 (AMGTTNQTMPFFTQFVQFKERYSDLPTLT). Asn-49 carries an N-linked (GlcNAc...) asparagine glycan. Residues 73–93 (FFVVANSIASAYLIISLPLSI) form a helical membrane-spanning segment. At 94-105 (VHIIRSRAKYSR) the chain is on the cytoplasmic side. Residues 106–126 (LILIFFDVAMLALVTAAASAG) traverse the membrane as a helical segment. The Extracellular segment spans residues 127–159 (AAIVYLAHNGNVSANWFAICQQFDSFCERISGS). Asn-137 carries an N-linked (GlcNAc...) asparagine glycan. The helical transmembrane segment at 160-180 (LIGSFAAMVVLILLILLSAVA) threads the bilayer. Topologically, residues 181–184 (LARR) are cytoplasmic.

The protein belongs to the Casparian strip membrane proteins (CASP) family. As to quaternary structure, homodimer and heterodimers.

The protein resides in the cell membrane. Functionally, regulates membrane-cell wall junctions and localized cell wall deposition. Required for establishment of the Casparian strip membrane domain (CSD) and the subsequent formation of Casparian strips, a cell wall modification of the root endodermis that determines an apoplastic barrier between the intraorganismal apoplasm and the extraorganismal apoplasm and prevents lateral diffusion. The polypeptide is Casparian strip membrane protein 3 (Brachypodium distachyon (Purple false brome)).